The sequence spans 217 residues: UPF0319 protein HS_1349 (217 aa).

An N-terminal signal peptide occupies residues 1–21; sequence MKFSFAALASAMLLTSTAAFA.

The protein belongs to the UPF0319 family.

This Histophilus somni (strain 129Pt) (Haemophilus somnus) protein is UPF0319 protein HS_1349.